The chain runs to 222 residues: N-(5'-phosphoribosyl)anthranilate isomerase (222 aa).

Belongs to the TrpF family.

It carries out the reaction N-(5-phospho-beta-D-ribosyl)anthranilate = 1-(2-carboxyphenylamino)-1-deoxy-D-ribulose 5-phosphate. It participates in amino-acid biosynthesis; L-tryptophan biosynthesis; L-tryptophan from chorismate: step 3/5. This chain is N-(5'-phosphoribosyl)anthranilate isomerase, found in Xanthomonas oryzae pv. oryzae (strain PXO99A).